The following is a 493-amino-acid chain: Ketol-acid reductoisomerase (NADP(+)) (493 aa).

One can recognise a KARI N-terminal Rossmann domain in the interval 14–208 (LDQLGRCRFM…GGDRAGVLES (195 aa)). Residues 45–48 (CGAQ), R68, R76, S78, and 108–110 (DKQ) each bind NADP(+). H132 is an active-site residue. G158 provides a ligand contact to NADP(+). KARI C-terminal knotted domains lie at 209-345 (SFVA…SPKA) and 346-486 (DGIK…MTDM). Residues D217, E221, E390, and E394 each coordinate Mg(2+). Residue S415 coordinates substrate.

The protein belongs to the ketol-acid reductoisomerase family. The cofactor is Mg(2+).

The catalysed reaction is (2R)-2,3-dihydroxy-3-methylbutanoate + NADP(+) = (2S)-2-acetolactate + NADPH + H(+). It carries out the reaction (2R,3R)-2,3-dihydroxy-3-methylpentanoate + NADP(+) = (S)-2-ethyl-2-hydroxy-3-oxobutanoate + NADPH + H(+). Its pathway is amino-acid biosynthesis; L-isoleucine biosynthesis; L-isoleucine from 2-oxobutanoate: step 2/4. It participates in amino-acid biosynthesis; L-valine biosynthesis; L-valine from pyruvate: step 2/4. Functionally, involved in the biosynthesis of branched-chain amino acids (BCAA). Catalyzes an alkyl-migration followed by a ketol-acid reduction of (S)-2-acetolactate (S2AL) to yield (R)-2,3-dihydroxy-isovalerate. In the isomerase reaction, S2AL is rearranged via a Mg-dependent methyl migration to produce 3-hydroxy-3-methyl-2-ketobutyrate (HMKB). In the reductase reaction, this 2-ketoacid undergoes a metal-dependent reduction by NADPH to yield (R)-2,3-dihydroxy-isovalerate. This is Ketol-acid reductoisomerase (NADP(+)) from Actinobacillus pleuropneumoniae serotype 3 (strain JL03).